The following is a 368-amino-acid chain: Phospho-N-acetylmuramoyl-pentapeptide-transferase (368 aa).

Helical transmembrane passes span 23–43, 72–92, 98–118, 139–159, 170–190, 201–221, 238–258, 281–301, and 345–365; these read YLTF…IFAG, VPTM…FLWA, HVWL…IDDY, VTLG…SVLL, LSVD…TAVS, GLAA…AYLC, AGEV…FLWF, VIAL…VFFV, and KIVI…LMTL.

It belongs to the glycosyltransferase 4 family. MraY subfamily. Mg(2+) serves as cofactor.

It is found in the cell inner membrane. It carries out the reaction UDP-N-acetyl-alpha-D-muramoyl-L-alanyl-gamma-D-glutamyl-meso-2,6-diaminopimeloyl-D-alanyl-D-alanine + di-trans,octa-cis-undecaprenyl phosphate = di-trans,octa-cis-undecaprenyl diphospho-N-acetyl-alpha-D-muramoyl-L-alanyl-D-glutamyl-meso-2,6-diaminopimeloyl-D-alanyl-D-alanine + UMP. Its pathway is cell wall biogenesis; peptidoglycan biosynthesis. In terms of biological role, catalyzes the initial step of the lipid cycle reactions in the biosynthesis of the cell wall peptidoglycan: transfers peptidoglycan precursor phospho-MurNAc-pentapeptide from UDP-MurNAc-pentapeptide onto the lipid carrier undecaprenyl phosphate, yielding undecaprenyl-pyrophosphoryl-MurNAc-pentapeptide, known as lipid I. The protein is Phospho-N-acetylmuramoyl-pentapeptide-transferase of Chlorobaculum tepidum (strain ATCC 49652 / DSM 12025 / NBRC 103806 / TLS) (Chlorobium tepidum).